A 188-amino-acid chain; its full sequence is Probable manganese efflux pump MntP (188 aa).

A run of 5 helical transmembrane segments spans residues 3–23, 66–86, 106–128, 143–163, and 168–188; these read ITAT…ASIG, LEWN…RMII, WLLV…GLAF, ATLI…PILG, and ILGG…HFHG.

Belongs to the MntP (TC 9.B.29) family.

It is found in the cell inner membrane. Probably functions as a manganese efflux pump. This is Probable manganese efflux pump MntP from Escherichia fergusonii (strain ATCC 35469 / DSM 13698 / CCUG 18766 / IAM 14443 / JCM 21226 / LMG 7866 / NBRC 102419 / NCTC 12128 / CDC 0568-73).